The primary structure comprises 376 residues: MDTSENAASAAEQQPTQQIDQLTVPNAPDGGSSAPAPSTSPNSISPSNPTGTPAPGASAQTPNPNAAGASASGSANYKLMCTLEGHTKSISSAKFSPCGKYLGTSSADKTVKIWNMDHMICERTLTGHKLGVNDIAWSSDSRCVVSASDDKTLKIFEIVTSRMTKTLKGHNNYVFCCNFNPQSSLVVSGSFDESVRIWDVKTGMCIKTLPAHSDPVSAVSFNRDGSLIASGSYDGLVRIWDTANGQCIKTLVDDENPPVAFVKFSPNGKYILASNLDSTLKLWDFSKGKTLKQYTGHENSKYCIFANFSVTGGKWIISGSEDCKIYIWNLQTREIVQCLEGHTQPVLASDCHPVQNIIASGALEPDNKIHIWRSDV.

Over residues 1–24 (MDTSENAASAAEQQPTQQIDQLTV) the composition is skewed to polar residues. The segment at 1 to 70 (MDTSENAASA…TPNPNAAGAS (70 aa)) is disordered. The span at 25–53 (PNAPDGGSSAPAPSTSPNSISPSNPTGTP) shows a compositional bias: low complexity. 7 WD repeats span residues 85 to 115 (GHTK…KIWN), 127 to 157 (GHKL…KIFE), 169 to 199 (GHNN…RIWD), 211 to 241 (AHSD…RIWD), 254 to 284 (DENP…KLWD), 296 to 329 (GHEN…YIWN), and 341 to 373 (GHTQ…HIWR).

It belongs to the WD repeat WDR5/wds family. Component of the SET2 complex (also known as the SET1/COMPASS complex), which contains at least set-2, swd-2.1, cfp-1, rbbp-5, wdr-5.1, dpy-30 and ash-2. Within the complex, interacts with cfp-1, ash-2, dpy-30 and hda-1. Interacts with histone H3 both unmethylated and methylated at 'Lys-4'. Interacts with jmjd-3.1, ceh-6, sox-2, sem-4 and egl-27. Interacts with set-2. Enriched in the germline. Detected in all nuclei of the embryo. In larvae, expression is detected in the nuclei of seam cells, somatic gonad precursor cells Z1 and Z4, vulval precursor cells, distal tip cells, hypodermal cells, intestinal and muscle cells. Also detected in the neurons from the ventral nerve cord, head and tail region. Expressed in the head and tail region, intestinal cells, muscle cells, cells of the vulva, spermatheca and sheath cells in adults.

Its subcellular location is the nucleus. Contributes to histone modification. May position the N-terminus of histone H3 for efficient trimethylation at 'Lys-4'. Required for di- and trimethylation, particularly for the trimethylation at 'Lys-4' of histone H3. Not required for demethylation of histone H3 'Lys-27'. H3 'Lys-4' methylation represents a specific tag for epigenetic transcriptional activation, germline establishment, maintenance and function. Implicated in the epigenetic inheritance of lifespan over several generations. Acts in the germline to limit the longevity of the soma, probably by regulating a lipid metabolism pathway that signals from the germline to the intestine, thereby preventing accumulation of mono-unsaturated fatty acids. Required for RNA interference with probable antagonistic role against hpl-2 function. Plays a role in vulval cell fate specification by acting in the synthetic multivulva pathway independent of set-2. Sex determining protein required in the germline to promote the spermatogenesis to oogenesis switch during the late larval stages of development. Acts with the sex determining factor tra-1, and redundantly with wdr-5.2, to regulate fog-3 expression, which in turn determines germ cell fate. Cooperates with jmjd-3.1, egl-27 and unc-3 to ensure robust transdifferentiation of the Y rectal cell to the PDA motor neuron during larval development. This is WD repeat-containing protein wdr-5.1 (wdr-5.1) from Caenorhabditis elegans.